The primary structure comprises 868 residues: DNA topoisomerase 1 (868 aa).

A Toprim domain is found at 3–147 (KSLVIVESPA…RYKRVVFNEI (145 aa)). Mg(2+) is bound at residue E9. Residues 34 to 70 (IRDLPTSGSSSSKEPAAKGRKSASEAPALSPKEKARR) are disordered. Residue D116 participates in Mg(2+) binding. In terms of domain architecture, Topo IA-type catalytic spans 163–580 (DINRVNAQQA…EFYGDFKKKL (418 aa)). The tract at residues 197-202 (SAGRVQ) is interaction with DNA. Y324 functions as the O-(5'-phospho-DNA)-tyrosine intermediate in the catalytic mechanism. 3 C4-type zinc fingers span residues 602 to 633 (CREC…KERC), 664 to 691 (CPIC…NPDC), and 713 to 738 (CDKC…NPTC).

Belongs to the type IA topoisomerase family. As to quaternary structure, monomer. Requires Mg(2+) as cofactor.

It catalyses the reaction ATP-independent breakage of single-stranded DNA, followed by passage and rejoining.. In terms of biological role, releases the supercoiling and torsional tension of DNA, which is introduced during the DNA replication and transcription, by transiently cleaving and rejoining one strand of the DNA duplex. Introduces a single-strand break via transesterification at a target site in duplex DNA. The scissile phosphodiester is attacked by the catalytic tyrosine of the enzyme, resulting in the formation of a DNA-(5'-phosphotyrosyl)-enzyme intermediate and the expulsion of a 3'-OH DNA strand. The free DNA strand then undergoes passage around the unbroken strand, thus removing DNA supercoils. Finally, in the religation step, the DNA 3'-OH attacks the covalent intermediate to expel the active-site tyrosine and restore the DNA phosphodiester backbone. The polypeptide is DNA topoisomerase 1 (Pseudomonas aeruginosa (strain ATCC 15692 / DSM 22644 / CIP 104116 / JCM 14847 / LMG 12228 / 1C / PRS 101 / PAO1)).